We begin with the raw amino-acid sequence, 513 residues long: Bifunctional pantoate ligase/cytidylate kinase (513 aa).

The interval 1–282 is pantoate--beta-alanine ligase; it reads MGTFHRLTTT…VGQTRLIDNC (282 aa). 32–39 provides a ligand contact to ATP; that stretch reads MGALHGGH. The Proton donor role is filled by His39. A (R)-pantoate-binding site is contributed by Gln63. Gln63 provides a ligand contact to beta-alanine. ATP is bound at residue 152–155; it reads GQKD. Gln158 provides a ligand contact to (R)-pantoate. Residues Val181 and 189–192 each bind ATP; that span reads LSSR. Positions 283 to 513 are cytidylate kinase; sequence LLDRRRPILA…HLYRSRFPQP (231 aa).

The protein in the N-terminal section; belongs to the pantothenate synthetase family. This sequence in the C-terminal section; belongs to the cytidylate kinase family. Type 1 subfamily.

It is found in the cytoplasm. The catalysed reaction is (R)-pantoate + beta-alanine + ATP = (R)-pantothenate + AMP + diphosphate + H(+). It catalyses the reaction CMP + ATP = CDP + ADP. It carries out the reaction dCMP + ATP = dCDP + ADP. It functions in the pathway cofactor biosynthesis; (R)-pantothenate biosynthesis; (R)-pantothenate from (R)-pantoate and beta-alanine: step 1/1. Catalyzes the condensation of pantoate with beta-alanine in an ATP-dependent reaction via a pantoyl-adenylate intermediate. Functionally, catalyzes the transfer of a phosphate group from ATP to either CMP or dCMP to form CDP or dCDP and ADP, respectively. The protein is Bifunctional pantoate ligase/cytidylate kinase of Thermosynechococcus vestitus (strain NIES-2133 / IAM M-273 / BP-1).